Here is a 260-residue protein sequence, read N- to C-terminus: Probable histidinol-phosphatase (260 aa).

This sequence belongs to the PHP hydrolase family. HisK subfamily.

The enzyme catalyses L-histidinol phosphate + H2O = L-histidinol + phosphate. It participates in amino-acid biosynthesis; L-histidine biosynthesis; L-histidine from 5-phospho-alpha-D-ribose 1-diphosphate: step 8/9. The chain is Probable histidinol-phosphatase (hisK) from Deinococcus radiodurans (strain ATCC 13939 / DSM 20539 / JCM 16871 / CCUG 27074 / LMG 4051 / NBRC 15346 / NCIMB 9279 / VKM B-1422 / R1).